The chain runs to 287 residues: Mitochondrial glycine transporter B (287 aa).

Solcar repeat units lie at residues 7–97 (HPAL…LKQH), 104–188 (PSAG…AKKA), and 198–282 (IAPL…LMAR). Helical transmembrane passes span 13–38 (FMCG…TRLQ), 72–98 (GVSP…KQHY), 110–135 (VLLG…TRFE), 163–186 (GLTA…SQAK), 202–228 (VNFG…KTHM), and 257–275 (GAVP…AWTV).

The protein belongs to the mitochondrial carrier (TC 2.A.29) family. SLC25A38 subfamily. As to expression, at 24 hours post-fertilization, expressed predominantly in posterior blood island, posterior cardinal vein and circulating blood. At 34 hours post-fertilization, becomes restricted to posterior blood island and circulating blood.

It is found in the mitochondrion inner membrane. It catalyses the reaction glycine(in) = glycine(out). In terms of biological role, mitochondrial glycine transporter that imports glycine into the mitochondrial matrix. Plays an important role in providing glycine for the first enzymatic step in heme biosynthesis, the condensation of glycine with succinyl-CoA to produce 5-aminolevulinate (ALA) in the mitochondrial matrix. Required during erythropoiesis. Functionally, may play a role as pro-apoptotic protein that induces caspase-dependent apoptosis. This Danio rerio (Zebrafish) protein is Mitochondrial glycine transporter B (slc25a38b).